The chain runs to 427 residues: O-methyltransferase FrzF (427 aa).

Asp-281 contributes to the S-adenosyl-L-methionine binding site. His-327 functions as the Proton acceptor in the catalytic mechanism.

This sequence belongs to the class I-like SAM-binding methyltransferase superfamily. Cation-independent O-methyltransferase family. Homodimer.

The catalysed reaction is (1S,4S)-4-[(4-hydroxyphenyl)methyl]-2,5-diazaspiro[bicyclo[3.2.1]octane-6,1'-cyclohexan]-4'-one + S-adenosyl-L-methionine = (1S,4S)-4-[(4-methoxyphenyl)methyl]-2,5-diazaspiro[bicyclo[3.2.1]octane-6,1'-cyclohexan]-4'-one + S-adenosyl-L-homocysteine + H(+). It catalyses the reaction (1S,4S)-4-[(4-hydroxyphenyl)methyl]-2-methyl-2,5-diazaspiro[bicyclo[3.2.1]octane-6,1'-cyclohexan]-4'-one + S-adenosyl-L-methionine = (1S,4S)-4-[(4-methoxyphenyl)methyl]-2-methyl-2,5-diazaspiro[bicyclo[3.2.1]octane-6,1'-cyclohexan]-4'-one + S-adenosyl-L-homocysteine + H(+). It participates in secondary metabolite biosynthesis. O-methyltransferase; part of the gene cluster that mediates the biosynthesis of the alkaloid (-)-FR901483, a potent immunosuppressant that shows efficacy in animal models and a probable inhibitor of purine nucleotide biosynthesis by targeting phosphoribosylpyrophosphate amidotransferase (PPAT). Within the pathway, FrzF methylates the phenolic oxygen at position C4. The biosynthesis of (-)-FR901483 starts with the condensation of two L-tyrosines to yield (S,S)-dityrosyl-piperazine. This process occurs in 3 steps with the non-canonical nonribosomal peptide synthetase FrzA catalyzing the reduction of L-tyrosine into L-tyrosinal, the spontaneous condensation of 2 L-tyrosinal units, and the subsequent reduction by the NmrA-like family domain-containing oxidoreductase FrzB. The cytochrome P450 monooxygenase FrzC then performs coupling between N10 and C1' to morph the piperazine into a 1,4-diazabicyclo[3.2.1]octane spiro-fused to a 2,5-cyclohexadienone. The dienone portion is further reduced to cyclohexanone by the flavin-dependent reductase FrzD. The methyltranserases (MTs) FrzE and FrzF are then involved in the methylation at the C10' amine and the C4 phenolic oxygen, respectively. The order of the two MTs appear to be interchangeable. Cleavage of the C9-N10' bond by the dioxygenase FrzG then leads to formation of a conjugated iminium. In addition to the oxidation of C9, an additional dehydrogenation between C7 and C8 can occur to give a likely shunt product. The next biosynthetic step is the intramolecular aldol condensation catalyzed by the newly identified aldolase FrzH to yield an aza-tricyclic product with the formation of a C9-C3' bond. The short-chain dehydrogenase/reductase FrzI then produces dephospho-(-)-FR901483 that is phosphorylated at C4'-OH into (-)-FR901483 by the phosphotransferase FrzJ. This Cladobotryum sp protein is O-methyltransferase FrzF.